A 322-amino-acid chain; its full sequence is (12E)-labda-8(17),12,14-triene synthase (322 aa).

Positions 1–11 (MNDATRTSTTP) are enriched in polar residues. Positions 1–26 (MNDATRTSTTPPALPMPDLRDSFPGP) are disordered. Asp-93 and Glu-98 together coordinate Mg(2+). Residues 93-98 (DDAHGE) carry the DDXXXE motif motif. Arg-188 is a binding site for substrate. Mg(2+)-binding residues include Asn-234 and Ser-238. The NXXXSXXXE motif signature appears at 234–242 (NDLASYAKE). Residue Lys-241 participates in substrate binding. Glu-242 is a Mg(2+) binding site. 319–320 (RY) contacts substrate.

The protein belongs to the terpene synthase family. Mg(2+) is required as a cofactor.

The catalysed reaction is (+)-copalyl diphosphate = (12E)-labda-8(17),12,14-triene + diphosphate. Involved in the biosynthesis of the labdane-type bicyclic diterpene labda-8(17),12(E),14-triene. Catalyzes the conversion of (+)-copalyl diphosphate to yield labda-8(17),12(E),14-triene. This chain is (12E)-labda-8(17),12,14-triene synthase, found in Streptomyces anulatus (Streptomyces chrysomallus).